Consider the following 223-residue polypeptide: Urease accessory protein UreF (223 aa).

This sequence belongs to the UreF family. As to quaternary structure, ureD, UreF and UreG form a complex that acts as a GTP-hydrolysis-dependent molecular chaperone, activating the urease apoprotein by helping to assemble the nickel containing metallocenter of UreC. The UreE protein probably delivers the nickel.

The protein localises to the cytoplasm. Functionally, required for maturation of urease via the functional incorporation of the urease nickel metallocenter. This chain is Urease accessory protein UreF, found in Rhizobium leguminosarum bv. viciae.